We begin with the raw amino-acid sequence, 401 residues long: Beta-ketoadipyl-CoA thiolase (401 aa).

Cysteine 90 serves as the catalytic Acyl-thioester intermediate. Catalysis depends on proton acceptor residues histidine 357 and cysteine 387.

This sequence belongs to the thiolase-like superfamily. Thiolase family.

It carries out the reaction succinyl-CoA + acetyl-CoA = 3-oxoadipyl-CoA + CoA. Its pathway is aromatic compound metabolism; phenylacetate degradation. Its function is as follows. Catalyzes thiolytic cleavage of beta-ketoadipyl-CoA to succinyl-CoA and acetyl-CoA. The sequence is that of Beta-ketoadipyl-CoA thiolase (paaJ) from Escherichia coli.